Reading from the N-terminus, the 519-residue chain is Histidine--tRNA ligase, cytoplasmic (519 aa).

L-histidine is bound by residues 135–137, arginine 162, glutamine 178, aspartate 182, arginine 331, and 335–336; these read DLT and YY.

It belongs to the class-II aminoacyl-tRNA synthetase family. In terms of assembly, homodimer.

It is found in the cytoplasm. It catalyses the reaction tRNA(His) + L-histidine + ATP = L-histidyl-tRNA(His) + AMP + diphosphate + H(+). Its function is as follows. Catalyzes the ATP-dependent ligation of histidine to the 3'-end of its cognate tRNA, via the formation of an aminoacyl-adenylate intermediate (His-AMP). Plays a role in axon guidance. The sequence is that of Histidine--tRNA ligase, cytoplasmic (hars1) from Takifugu rubripes (Japanese pufferfish).